Consider the following 181-residue polypeptide: Probable pyruvoyl-dependent arginine decarboxylase (181 aa).

The residue at position 43 (Ser43) is a Pyruvic acid (Ser).

It belongs to the PdaD family. Requires pyruvate as cofactor.

It carries out the reaction L-arginine + H(+) = agmatine + CO2. This Chlorobaculum parvum (strain DSM 263 / NCIMB 8327) (Chlorobium vibrioforme subsp. thiosulfatophilum) protein is Probable pyruvoyl-dependent arginine decarboxylase.